Here is a 155-residue protein sequence, read N- to C-terminus: Large ribosomal subunit protein uL13 (155 aa).

It belongs to the universal ribosomal protein uL13 family. In terms of assembly, part of the 50S ribosomal subunit.

In terms of biological role, this protein is one of the early assembly proteins of the 50S ribosomal subunit, although it is not seen to bind rRNA by itself. It is important during the early stages of 50S assembly. This is Large ribosomal subunit protein uL13 from Rickettsia typhi (strain ATCC VR-144 / Wilmington).